A 1799-amino-acid polypeptide reads, in one-letter code: Putative neural-cadherin 2 (1799 aa).

N-linked (GlcNAc...) asparagine glycans are attached at residues Asn13, Asn64, Asn86, Asn118, Asn195, Asn260, Asn264, Asn283, and Asn377. 7 Cadherin domains span residues 37–136, 137–252, 253–364, 368–485, 486–590, 590–709, and 708–812; these read DRFL…PPVF, DRQT…APQF, PQGI…PPQF, EWVT…VPKF, DREH…APTF, FAQD…QPGS, and GSKS…AGSM. Asn601, Asn793, Asn910, Asn948, and Asn969 each carry an N-linked (GlcNAc...) asparagine glycan. The EGF-like 1 domain occupies 973-1010; it reads QDHNCRTHLCYNGGRCVETRNGPKCVACPVGYNGPRCQ. Cystine bridges form between Cys977/Cys988, Cys982/Cys997, Cys1000/Cys1009, Cys1191/Cys1217, Cys1224/Cys1239, Cys1233/Cys1248, and Cys1250/Cys1259. The Laminin G-like 1 domain maps to 1011–1217; the sequence is QSTRSFRGNG…ALARNSFPAC (207 aa). Residues 1220–1260 form the EGF-like 2 domain; the sequence is TDEVCLKTEHTARCWEHGNCVASLVQAKCHCQPGWMGPGCN. One can recognise a Laminin G-like 2 domain in the interval 1263–1454; the sequence is TIPTTFKAQS…TMARNLERNC (192 aa). Residues Asn1376 and Asn1437 are each glycosylated (N-linked (GlcNAc...) asparagine). Disulfide bonds link Cys1419–Cys1454, Cys1501–Cys1512, Cys1506–Cys1523, and Cys1525–Cys1534. An EGF-like 3; calcium-binding domain is found at 1497–1535; the sequence is DRNECLDLPCLNGATCINLEPRLRYRCICPEGYWGENCE. The helical transmembrane segment at 1549-1569 threads the bilayer; that stretch reads ALGAIFVCLIIILILALIFVL. Residues 1726–1799 form a disordered region; sequence ASSQLPSDGG…PLPEVDKVVL (74 aa). Composition is skewed to gly residues over residues 1733-1744, 1752-1763, and 1775-1786; these read DGGGGSGDGPGP, LGGGGTGGGSGI, and SGAGPGGGGGSS.

It is found in the cell membrane. In terms of biological role, cadherins are calcium-dependent cell adhesion proteins. They preferentially interact with themselves in a homophilic manner in connecting cells. This is Putative neural-cadherin 2 (CadN2) from Drosophila melanogaster (Fruit fly).